Here is a 276-residue protein sequence, read N- to C-terminus: Non-heme chloroperoxidase (276 aa).

Positions 24-254 (PVVFHHGWPL…NATLKSYEGL (231 aa)) constitute an AB hydrolase-1 domain. Residues Ser-97, Asp-227, and His-256 contribute to the active site.

It belongs to the AB hydrolase superfamily. Bacterial non-heme haloperoxidase / perhydrolase family. In terms of assembly, homodimer.

In Streptomyces lividans, this protein is Non-heme chloroperoxidase (cpo).